The chain runs to 44 residues: Thymosin beta-4 (44 aa).

Composition is skewed to basic and acidic residues over residues 1–25 (MSDKPDMAEIEKFDKAKLKKTETQE) and 33–44 (ETIEQEKQTSES). The segment at 1–44 (MSDKPDMAEIEKFDKAKLKKTETQEKNPLPSKETIEQEKQTSES) is disordered. S2 is modified (N-acetylserine).

The protein belongs to the thymosin beta family. In terms of tissue distribution, spleen, kidney, heart, and oocytes.

Its subcellular location is the cytoplasm. The protein resides in the cytoskeleton. Its function is as follows. Plays an important role in the organization of the cytoskeleton. Binds to and sequesters actin monomers (G actin) and therefore inhibits actin polymerization. The protein is Thymosin beta-4 (tmsb4) of Xenopus laevis (African clawed frog).